The sequence spans 396 residues: Acetate kinase (396 aa).

N8 contacts Mg(2+). Position 15 (K15) interacts with ATP. Residue R89 coordinates substrate. D146 functions as the Proton donor/acceptor in the catalytic mechanism. Residues 206 to 210 (HIGNG), 283 to 285 (DMR), and 331 to 335 (GVGEN) contribute to the ATP site. E383 is a binding site for Mg(2+).

Belongs to the acetokinase family. As to quaternary structure, homodimer. Mg(2+) is required as a cofactor. It depends on Mn(2+) as a cofactor.

Its subcellular location is the cytoplasm. The enzyme catalyses acetate + ATP = acetyl phosphate + ADP. Its pathway is metabolic intermediate biosynthesis; acetyl-CoA biosynthesis; acetyl-CoA from acetate: step 1/2. Its function is as follows. Catalyzes the formation of acetyl phosphate from acetate and ATP. Can also catalyze the reverse reaction. The sequence is that of Acetate kinase from Streptococcus pneumoniae (strain ATCC 700669 / Spain 23F-1).